A 289-amino-acid polypeptide reads, in one-letter code: Ribosomal RNA small subunit methyltransferase A (289 aa).

The S-adenosyl-L-methionine site is built by asparagine 33, valine 35, glycine 60, glutamate 81, aspartate 111, and asparagine 130.

Belongs to the class I-like SAM-binding methyltransferase superfamily. rRNA adenine N(6)-methyltransferase family. RsmA subfamily.

It is found in the cytoplasm. The catalysed reaction is adenosine(1518)/adenosine(1519) in 16S rRNA + 4 S-adenosyl-L-methionine = N(6)-dimethyladenosine(1518)/N(6)-dimethyladenosine(1519) in 16S rRNA + 4 S-adenosyl-L-homocysteine + 4 H(+). Specifically dimethylates two adjacent adenosines (A1518 and A1519) in the loop of a conserved hairpin near the 3'-end of 16S rRNA in the 30S particle. May play a critical role in biogenesis of 30S subunits. The protein is Ribosomal RNA small subunit methyltransferase A of Corynebacterium efficiens (strain DSM 44549 / YS-314 / AJ 12310 / JCM 11189 / NBRC 100395).